A 443-amino-acid polypeptide reads, in one-letter code: DNA double-strand break repair protein Mre11 (443 aa).

4 residues coordinate Mn(2+): Asp8, His10, Asp49, and Asn84. The active-site Proton donor is the His85. Mn(2+) is bound by residues His169, His201, and His203. A disordered region spans residues 382–429 (QEEGAEERVVEEETEKKVEEQFKGDEEADEAERRAEETEKAKSTKKAR). Positions 395-423 (TEKKVEEQFKGDEEADEAERRAEETEKAK) are enriched in basic and acidic residues.

The protein belongs to the MRE11/RAD32 family. In terms of assembly, homodimer. Forms a heterotetramer composed of two Mre11 subunits and two Rad50 subunits. Mn(2+) is required as a cofactor.

Its activity is regulated as follows. Nuclease activity is regulated by Rad50. Its function is as follows. Part of the Rad50/Mre11 complex, which is involved in the early steps of DNA double-strand break (DSB) repair. The complex may facilitate opening of the processed DNA ends to aid in the recruitment of HerA and NurA. Mre11 binds to DSB ends and has both double-stranded 3'-5' exonuclease activity and single-stranded endonuclease activity. This is DNA double-strand break repair protein Mre11 from Archaeoglobus fulgidus (strain ATCC 49558 / DSM 4304 / JCM 9628 / NBRC 100126 / VC-16).